A 507-amino-acid polypeptide reads, in one-letter code: Histidine ammonia-lyase (507 aa).

The segment at residues 141–143 (ASG) is a cross-link (5-imidazolinone (Ala-Gly)). At serine 142 the chain carries 2,3-didehydroalanine (Ser).

Belongs to the PAL/histidase family. Post-translationally, contains an active site 4-methylidene-imidazol-5-one (MIO), which is formed autocatalytically by cyclization and dehydration of residues Ala-Ser-Gly.

It localises to the cytoplasm. It carries out the reaction L-histidine = trans-urocanate + NH4(+). It participates in amino-acid degradation; L-histidine degradation into L-glutamate; N-formimidoyl-L-glutamate from L-histidine: step 1/3. The polypeptide is Histidine ammonia-lyase (Burkholderia mallei (strain NCTC 10247)).